We begin with the raw amino-acid sequence, 185 residues long: Large ribosomal subunit protein uL5 (185 aa).

Belongs to the universal ribosomal protein uL5 family. Part of the 50S ribosomal subunit; part of the 5S rRNA/L5/L18/L25 subcomplex. Contacts the 5S rRNA and the P site tRNA. Forms a bridge to the 30S subunit in the 70S ribosome.

Its function is as follows. This is one of the proteins that bind and probably mediate the attachment of the 5S RNA into the large ribosomal subunit, where it forms part of the central protuberance. In the 70S ribosome it contacts protein S13 of the 30S subunit (bridge B1b), connecting the 2 subunits; this bridge is implicated in subunit movement. Contacts the P site tRNA; the 5S rRNA and some of its associated proteins might help stabilize positioning of ribosome-bound tRNAs. The protein is Large ribosomal subunit protein uL5 of Bartonella tribocorum (strain CIP 105476 / IBS 506).